The following is a 63-amino-acid chain: uncharacterized protein (63 aa).

The protein localises to the mitochondrion. This is an uncharacterized protein from Marchantia polymorpha (Common liverwort).